Reading from the N-terminus, the 45-residue chain is DNA-directed RNA polymerase subunit Rpo12 (45 aa).

Zn(2+) is bound by residues C8, C23, and C26.

The protein belongs to the archaeal Rpo12/eukaryotic RPC10 RNA polymerase subunit family. In terms of assembly, part of the RNA polymerase complex. The cofactor is Zn(2+).

Its subcellular location is the cytoplasm. It catalyses the reaction RNA(n) + a ribonucleoside 5'-triphosphate = RNA(n+1) + diphosphate. Functionally, DNA-dependent RNA polymerase (RNAP) catalyzes the transcription of DNA into RNA using the four ribonucleoside triphosphates as substrates. The protein is DNA-directed RNA polymerase subunit Rpo12 of Methanothrix thermoacetophila (strain DSM 6194 / JCM 14653 / NBRC 101360 / PT) (Methanosaeta thermophila).